Here is a 356-residue protein sequence, read N- to C-terminus: Phosphatidylglycerol--prolipoprotein diacylglyceryl transferase (356 aa).

The next 4 helical transmembrane spans lie at 24-44 (IKWYGIFITVGFVLAIILACV), 59-79 (WFVFIGIPVSLLGARIWSFII), 103-123 (LAIEGGVLLTVIAALIYFPLV), and 144-164 (VSMWVYADAIVPCILVGQIIG). Arg165 contacts a 1,2-diacyl-sn-glycero-3-phospho-(1'-sn-glycerol). 2 helical membrane-spanning segments follow: residues 209–229 (PFFLYESFINFWFFLAIYIGG) and 265–285 (FATSIVMSVLFALFGIILLVC).

Belongs to the Lgt family.

Its subcellular location is the cell membrane. The enzyme catalyses L-cysteinyl-[prolipoprotein] + a 1,2-diacyl-sn-glycero-3-phospho-(1'-sn-glycerol) = an S-1,2-diacyl-sn-glyceryl-L-cysteinyl-[prolipoprotein] + sn-glycerol 1-phosphate + H(+). The protein operates within protein modification; lipoprotein biosynthesis (diacylglyceryl transfer). Catalyzes the transfer of the diacylglyceryl group from phosphatidylglycerol to the sulfhydryl group of the N-terminal cysteine of a prolipoprotein, the first step in the formation of mature lipoproteins. The protein is Phosphatidylglycerol--prolipoprotein diacylglyceryl transferase of Malacoplasma penetrans (strain HF-2) (Mycoplasma penetrans).